The following is a 359-amino-acid chain: DNA replication and repair protein RecF (359 aa).

30–37 (GPNGSGKT) serves as a coordination point for ATP.

The protein belongs to the RecF family.

It is found in the cytoplasm. Its function is as follows. The RecF protein is involved in DNA metabolism; it is required for DNA replication and normal SOS inducibility. RecF binds preferentially to single-stranded, linear DNA. It also seems to bind ATP. The polypeptide is DNA replication and repair protein RecF (Vibrio vulnificus (strain CMCP6)).